The chain runs to 461 residues: Cysteine--tRNA ligase (461 aa).

Zn(2+) is bound at residue C28. The 'HIGH' region signature appears at 30–40; that stretch reads ITVYDLCHIGH. Zn(2+) is bound by residues C209, H234, and E238. The short motif at 266-270 is the 'KMSKS' region element; it reads KMSKS. Residue K269 participates in ATP binding.

It belongs to the class-I aminoacyl-tRNA synthetase family. As to quaternary structure, monomer. Zn(2+) serves as cofactor.

Its subcellular location is the cytoplasm. The enzyme catalyses tRNA(Cys) + L-cysteine + ATP = L-cysteinyl-tRNA(Cys) + AMP + diphosphate. This Shigella flexneri protein is Cysteine--tRNA ligase.